We begin with the raw amino-acid sequence, 332 residues long: MVSVSVMGAGSWGTTLAKVFSDAGNAVTLWARREELASTIRDSHENRDYLPGITLPESLQVTSSATEALEGAAIVVLAIPSQALRGNLAEWKETIPQDATLVSLAKGIEKGTHLRMSEVIAEVTEADPSRIAVLSGPNLAREIAEGQPAATVIACPDENRAKLVQAAVAAPYFRPYTNTDVVGTEIGGACKNVIALACGISHGYGLGENTNASLITRGLAEIARLGATLGADAKTFSGLAGMGDLVATCSSPLSRNRSFGERLGQGESLEKAREATNGQVAEGVISSQSIFDLATKLGVEMPITQAVYGVCHRDMKVTDMIVALMGRSKKAE.

Residues Ser-11, Trp-12, Arg-32, Arg-33, and Lys-106 each coordinate NADPH. Sn-glycerol 3-phosphate is bound by residues Lys-106 and Gly-136. Residue Ala-140 participates in NADPH binding. Positions 191, 244, 254, 255, and 256 each coordinate sn-glycerol 3-phosphate. Residue Lys-191 is the Proton acceptor of the active site. Arg-255 contacts NADPH. Residues Val-280 and Glu-282 each coordinate NADPH.

The protein belongs to the NAD-dependent glycerol-3-phosphate dehydrogenase family.

The protein localises to the cytoplasm. The enzyme catalyses sn-glycerol 3-phosphate + NAD(+) = dihydroxyacetone phosphate + NADH + H(+). It catalyses the reaction sn-glycerol 3-phosphate + NADP(+) = dihydroxyacetone phosphate + NADPH + H(+). It participates in membrane lipid metabolism; glycerophospholipid metabolism. Its function is as follows. Catalyzes the reduction of the glycolytic intermediate dihydroxyacetone phosphate (DHAP) to sn-glycerol 3-phosphate (G3P), the key precursor for phospholipid synthesis. This is Glycerol-3-phosphate dehydrogenase [NAD(P)+] from Corynebacterium glutamicum (strain R).